Here is a 332-residue protein sequence, read N- to C-terminus: Ornithine carbamoyltransferase, catabolic (332 aa).

Residues 60 to 63, Gln-87, Arg-111, and 138 to 141 contribute to the carbamoyl phosphate site; these read STRT and HPTQ. L-ornithine is bound by residues Asn-170, Asp-230, and 234 to 235; that span reads SM. Carbamoyl phosphate is bound by residues 271–272 and Arg-316; that span reads CL.

This sequence belongs to the aspartate/ornithine carbamoyltransferase superfamily. OTCase family.

It is found in the cytoplasm. It carries out the reaction carbamoyl phosphate + L-ornithine = L-citrulline + phosphate + H(+). The protein operates within amino-acid degradation; L-arginine degradation via ADI pathway; carbamoyl phosphate from L-arginine: step 2/2. In terms of biological role, reversibly catalyzes the transfer of the carbamoyl group from carbamoyl phosphate (CP) to the N(epsilon) atom of ornithine (ORN) to produce L-citrulline. The sequence is that of Ornithine carbamoyltransferase, catabolic from Bacillus thuringiensis subsp. konkukian (strain 97-27).